A 432-amino-acid chain; its full sequence is Adenylosuccinate lyase (432 aa).

Residues 4–5 (RY), 67–69 (RHD), and 93–94 (TS) contribute to the N(6)-(1,2-dicarboxyethyl)-AMP site. Residue His-141 is the Proton donor/acceptor of the active site. Residue Gln-212 coordinates N(6)-(1,2-dicarboxyethyl)-AMP. Ser-262 acts as the Proton donor/acceptor in catalysis. N(6)-(1,2-dicarboxyethyl)-AMP-binding positions include Ser-263, 268–270 (KRN), Asn-276, and 307–311 (SAERI).

It belongs to the lyase 1 family. Adenylosuccinate lyase subfamily. Homodimer and homotetramer. Residues from neighboring subunits contribute catalytic and substrate-binding residues to each active site.

It catalyses the reaction N(6)-(1,2-dicarboxyethyl)-AMP = fumarate + AMP. The enzyme catalyses (2S)-2-[5-amino-1-(5-phospho-beta-D-ribosyl)imidazole-4-carboxamido]succinate = 5-amino-1-(5-phospho-beta-D-ribosyl)imidazole-4-carboxamide + fumarate. It functions in the pathway purine metabolism; AMP biosynthesis via de novo pathway; AMP from IMP: step 2/2. The protein operates within purine metabolism; IMP biosynthesis via de novo pathway; 5-amino-1-(5-phospho-D-ribosyl)imidazole-4-carboxamide from 5-amino-1-(5-phospho-D-ribosyl)imidazole-4-carboxylate: step 2/2. Its function is as follows. Catalyzes two reactions in de novo purine nucleotide biosynthesis. Catalyzes the breakdown of 5-aminoimidazole- (N-succinylocarboxamide) ribotide (SAICAR or 2-[5-amino-1-(5-phospho-beta-D-ribosyl)imidazole-4-carboxamido]succinate) to 5-aminoimidazole-4-carboxamide ribotide (AICAR or 5-amino-1-(5-phospho-beta-D-ribosyl)imidazole-4-carboxamide) and fumarate, and of adenylosuccinate (ADS or N(6)-(1,2-dicarboxyethyl)-AMP) to adenosine monophosphate (AMP) and fumarate. In Streptococcus mutans serotype c (strain ATCC 700610 / UA159), this protein is Adenylosuccinate lyase (purB).